The chain runs to 124 residues: Large ribosomal subunit protein bL17 (124 aa).

Belongs to the bacterial ribosomal protein bL17 family. Part of the 50S ribosomal subunit. Contacts protein L32.

This chain is Large ribosomal subunit protein bL17, found in Trichlorobacter lovleyi (strain ATCC BAA-1151 / DSM 17278 / SZ) (Geobacter lovleyi).